The following is a 291-amino-acid chain: MSYKLALSGVACLTKSTILRKLEARKYFRVHMLDYKELYDRFDFDLRVGALLHTAYRCTHDRSATVGEYDRVHIFDRLPTESVVYGAIAQGLSEEDGRRAYEKCLEMNLHEDWRSVVLMAAPDTESLVTEKMKRRNNGIDCMNEQYVLAQNKHFKIWSEVMNAPAVEIDWRLDMEAQQTRVINLLHDLVYRWETRENDVLVYYHLLPILRRRYVVCDKGDCPARLREAIDQGSTVVLRWPAGADLEAAKREAVEACKVPLVAVIARDSEWLRSADFERYVVERVLNRAFDC.

This is an uncharacterized protein from Lymantria dispar multicapsid nuclear polyhedrosis virus (LdMNPV).